Consider the following 605-residue polypeptide: Protein phosphatase 1D (605 aa).

The interaction with CHEK1 stretch occupies residues 1-101; it reads MAGLYSLGVS…CRRRSSVAFF (101 aa). Residues 8–375 form the PPM-type phosphatase domain; sequence GVSVFSDQGG…DNTSAIVICI (368 aa). Residues 28 to 90 are disordered; that stretch reads VVEPEPTAEE…DAGASPAPSR (63 aa). Residues S40 and S85 each carry the phosphoserine modification. Residues D105, G106, D314, and D366 each coordinate Mn(2+). The segment at 516–591 is disordered; it reads STPGQMKAQE…RRLRGQKKIG (76 aa). 2 stretches are compositionally biased toward polar residues: residues 530–544 and 555–577; these read PPTN…SNSG and LSRS…NSVK. A compositionally biased stretch (basic residues) spans 579–588; that stretch reads TMRRRLRGQK.

This sequence belongs to the PP2C family. Interacts with CHEK1 and CHEK2; dephosphorylates them. Interacts with MAPK14. Mg(2+) serves as cofactor. The cofactor is Mn(2+). In terms of tissue distribution, expressed in fetal and adult brain. Also detected in fetal liver and skeletal muscle, but not in their adult counterparts.

Its subcellular location is the nucleus. It is found in the cytoplasm. It localises to the cytosol. The catalysed reaction is O-phospho-L-seryl-[protein] + H2O = L-seryl-[protein] + phosphate. It carries out the reaction O-phospho-L-threonyl-[protein] + H2O = L-threonyl-[protein] + phosphate. Involved in the negative regulation of p53 expression. Required for the relief of p53-dependent checkpoint mediated cell cycle arrest. Binds to and dephosphorylates 'Ser-15' of TP53 and 'Ser-345' of CHEK1 which contributes to the functional inactivation of these proteins. Mediates MAPK14 dephosphorylation and inactivation. Is also an important regulator of global heterochromatin silencing and critical in maintaining genome integrity. The polypeptide is Protein phosphatase 1D (PPM1D) (Homo sapiens (Human)).